A 253-amino-acid chain; its full sequence is 4-hydroxy-tetrahydrodipicolinate reductase (253 aa).

Position 16-21 (16-21) interacts with NAD(+); it reads GDTGRM. Residue R44 participates in NADP(+) binding. NAD(+) is bound by residues 85–87 and 111–114; these read GTT and CANT. The Proton donor/acceptor role is filled by H144. A (S)-2,3,4,5-tetrahydrodipicolinate-binding site is contributed by H145. K148 (proton donor) is an active-site residue. (S)-2,3,4,5-tetrahydrodipicolinate is bound at residue 154 to 155; that stretch reads GT.

It belongs to the DapB family.

The protein localises to the cytoplasm. It carries out the reaction (S)-2,3,4,5-tetrahydrodipicolinate + NAD(+) + H2O = (2S,4S)-4-hydroxy-2,3,4,5-tetrahydrodipicolinate + NADH + H(+). It catalyses the reaction (S)-2,3,4,5-tetrahydrodipicolinate + NADP(+) + H2O = (2S,4S)-4-hydroxy-2,3,4,5-tetrahydrodipicolinate + NADPH + H(+). It participates in amino-acid biosynthesis; L-lysine biosynthesis via DAP pathway; (S)-tetrahydrodipicolinate from L-aspartate: step 4/4. Functionally, catalyzes the conversion of 4-hydroxy-tetrahydrodipicolinate (HTPA) to tetrahydrodipicolinate. The protein is 4-hydroxy-tetrahydrodipicolinate reductase of Chlamydia trachomatis serovar A (strain ATCC VR-571B / DSM 19440 / HAR-13).